Here is a 433-residue protein sequence, read N- to C-terminus: Protein slt1 (433 aa).

Disordered regions lie at residues 159 to 184 (SPEESSESQAEVADQQTGPYSTSEYA), 200 to 234 (NAPEQQSGPDVAELNTLPNRSKTSSQASVSDEELS), and 252 to 433 (SNKR…DEDA). Composition is skewed to polar residues over residues 172–184 (DQQTGPYSTSEYA) and 215–228 (TLPNRSKTSSQASV). Phosphoserine is present on residues Ser227, Ser229, and Ser269. Over residues 343–353 (IDTKAGEKLTD) the composition is skewed to basic and acidic residues. Positions 385–421 (EGSNNHEQGSFNEPKSNVDSNDSASPKRPSSQASLRH) are enriched in polar residues. Ser409, Ser415, and Ser418 each carry phosphoserine.

The sequence is that of Protein slt1 (slt1) from Schizosaccharomyces pombe (strain 972 / ATCC 24843) (Fission yeast).